Consider the following 251-residue polypeptide: Adenosine 5'-phosphosulfate reductase (251 aa).

The [4Fe-4S] cluster site is built by C121, C122, C204, and C207. Residue C232 is the Nucleophile; cysteine thiosulfonate intermediate of the active site.

Belongs to the PAPS reductase family. CysH subfamily. [4Fe-4S] cluster serves as cofactor.

It is found in the cytoplasm. It catalyses the reaction [thioredoxin]-disulfide + sulfite + AMP + 2 H(+) = adenosine 5'-phosphosulfate + [thioredoxin]-dithiol. It participates in sulfur metabolism; hydrogen sulfide biosynthesis; sulfite from sulfate. Functionally, catalyzes the formation of sulfite from adenosine 5'-phosphosulfate (APS) using thioredoxin as an electron donor. This is Adenosine 5'-phosphosulfate reductase from Sinorhizobium fredii (strain NBRC 101917 / NGR234).